A 454-amino-acid polypeptide reads, in one-letter code: Asparagine--tRNA ligase (454 aa).

The protein belongs to the class-II aminoacyl-tRNA synthetase family. In terms of assembly, homodimer.

The protein resides in the cytoplasm. The catalysed reaction is tRNA(Asn) + L-asparagine + ATP = L-asparaginyl-tRNA(Asn) + AMP + diphosphate + H(+). In Mesoplasma florum (strain ATCC 33453 / NBRC 100688 / NCTC 11704 / L1) (Acholeplasma florum), this protein is Asparagine--tRNA ligase.